Reading from the N-terminus, the 505-residue chain is Lysine--tRNA ligase (505 aa).

Mg(2+)-binding residues include Glu415 and Glu422.

Belongs to the class-II aminoacyl-tRNA synthetase family. Homodimer. The cofactor is Mg(2+).

It is found in the cytoplasm. It carries out the reaction tRNA(Lys) + L-lysine + ATP = L-lysyl-tRNA(Lys) + AMP + diphosphate. This Yersinia pseudotuberculosis serotype O:1b (strain IP 31758) protein is Lysine--tRNA ligase.